A 258-amino-acid chain; its full sequence is Indole-3-glycerol phosphate synthase (258 aa).

It belongs to the TrpC family.

It carries out the reaction 1-(2-carboxyphenylamino)-1-deoxy-D-ribulose 5-phosphate + H(+) = (1S,2R)-1-C-(indol-3-yl)glycerol 3-phosphate + CO2 + H2O. Its pathway is amino-acid biosynthesis; L-tryptophan biosynthesis; L-tryptophan from chorismate: step 4/5. This chain is Indole-3-glycerol phosphate synthase, found in Endomicrobium trichonymphae.